The primary structure comprises 102 residues: Large ribosomal subunit protein bL21 (102 aa).

Belongs to the bacterial ribosomal protein bL21 family. Part of the 50S ribosomal subunit. Contacts protein L20.

This protein binds to 23S rRNA in the presence of protein L20. The protein is Large ribosomal subunit protein bL21 of Sulfurimonas denitrificans (strain ATCC 33889 / DSM 1251) (Thiomicrospira denitrificans (strain ATCC 33889 / DSM 1251)).